A 135-amino-acid chain; its full sequence is Small ribosomal subunit protein uS8 (135 aa).

The protein belongs to the universal ribosomal protein uS8 family. In terms of assembly, part of the 30S ribosomal subunit. Contacts proteins S5 and S12.

Functionally, one of the primary rRNA binding proteins, it binds directly to 16S rRNA central domain where it helps coordinate assembly of the platform of the 30S subunit. This is Small ribosomal subunit protein uS8 from Salinispora arenicola (strain CNS-205).